We begin with the raw amino-acid sequence, 319 residues long: MAKGIRHHRVGEAVDGYLLIKTATKQIASNSKPFLTLILGDHTGEIEAKLWGISPEDEATFVNKTIVHIQGDVIDYRGRLQLKIASIRPTSAMDGVHLNDFVRSAPLAPNDMLDEVNQYIFEIHNPHIQRITRFLLKKHQQAFLESPAATKNHHEFMSGLAFHVVSMLRIGKSLIELYPTLDKDLLYAGIILHDLGKVRELSGAIDTTYTLEGKLLGHISIMSNEIAQAAKELEIDGEEVLILQHLILSHHGKGEWGSPKTPVVREAEVLHLIDNIDAKINMMDRALERVQPGEFSERVMALDNRSFYKPSFHKKPIEL.

A DNA-binding region (OB) is located at residues 12-90 (EAVDGYLLIK…QLKIASIRPT (79 aa)). The region spanning 163 to 279 (HVVSMLRIGK…LHLIDNIDAK (117 aa)) is the HD domain.

The protein belongs to the YhaM family.

Shows a 3'-5' exoribonuclease activity. This is 3'-5' exoribonuclease YhaM from Shouchella clausii (strain KSM-K16) (Alkalihalobacillus clausii).